The following is a 117-amino-acid chain: Large ribosomal subunit protein uL18 (117 aa).

This sequence belongs to the universal ribosomal protein uL18 family. Part of the 50S ribosomal subunit; part of the 5S rRNA/L5/L18/L25 subcomplex. Contacts the 5S and 23S rRNAs.

This is one of the proteins that bind and probably mediate the attachment of the 5S RNA into the large ribosomal subunit, where it forms part of the central protuberance. The sequence is that of Large ribosomal subunit protein uL18 from Francisella philomiragia subsp. philomiragia (strain ATCC 25017 / CCUG 19701 / FSC 153 / O#319-036).